A 316-amino-acid chain; its full sequence is Taste receptor type 2 member 3 (316 aa).

The Extracellular portion of the chain corresponds to 1–7 (MFGFIEG). A helical membrane pass occupies residues 8–28 (VFLVLTITEFILGNLVNGFIV). The Cytoplasmic segment spans residues 29–50 (SINSSYWFKSKKISLSNFIITS). The chain crosses the membrane as a helical span at residues 51-71 (LALFRIFLLWIIFIDSLIIVF). Topologically, residues 72 to 86 (SYQTHDSGIMMQLID) are extracellular. Residues 87–107 (VFWTFTNHFSIWLISCLSVFY) traverse the membrane as a helical segment. Topologically, residues 108-128 (CLKIASFSHPSFLWLKWRASR) are cytoplasmic. A helical membrane pass occupies residues 129–149 (VVVGMLWGALLLSCVSTMSLM). The Extracellular segment spans residues 150-186 (NEFKIYSALTRSKDTPNMTEYIRLKRQEYNLMHVLGN). Asn166 carries N-linked (GlcNAc...) asparagine glycosylation. A helical transmembrane segment spans residues 187 to 207 (LWKIPSLIVSLVAYLLLLLSL). At 208-234 (GKHTQQMQQYSIDSRDQSAEAHKRAMR) the chain is on the cytoplasmic side. The helical transmembrane segment at 235–255 (IISSFLLFFLFYFLSFMILSS) threads the bilayer. The Extracellular portion of the chain corresponds to 256–266 (SRFLPETRIAR). The chain crosses the membrane as a helical span at residues 267–287 (IIGVVISMSYLVGDSFILIVC). The Cytoplasmic segment spans residues 288 to 316 (NNKLKHTFVAMLPCECGHLKPGSKGPSAS).

Belongs to the G-protein coupled receptor T2R family.

It is found in the membrane. Gustducin-coupled receptor implicated in the perception of bitter compounds in the oral cavity and the gastrointestinal tract. Signals through PLCB2 and the calcium-regulated cation channel TRPM5. The chain is Taste receptor type 2 member 3 (Tas2r3) from Mus musculus (Mouse).